The following is a 364-amino-acid chain: Aminomethyltransferase (364 aa).

The protein belongs to the GcvT family. As to quaternary structure, the glycine cleavage system is composed of four proteins: P, T, L and H.

The enzyme catalyses N(6)-[(R)-S(8)-aminomethyldihydrolipoyl]-L-lysyl-[protein] + (6S)-5,6,7,8-tetrahydrofolate = N(6)-[(R)-dihydrolipoyl]-L-lysyl-[protein] + (6R)-5,10-methylene-5,6,7,8-tetrahydrofolate + NH4(+). Functionally, the glycine cleavage system catalyzes the degradation of glycine. The chain is Aminomethyltransferase from Shewanella baltica (strain OS195).